The sequence spans 287 residues: mRNA-capping enzyme regulatory subunit OPG124 (287 aa).

This sequence belongs to the orthopoxvirus mRNA-capping enzyme regulatory subunit family. In terms of assembly, interacts with the late transcription elongation factor VLTF-4/OPG110. Interacts with the late transcription factors VLTF-1.

The protein localises to the virion. Its function is as follows. Acts with RNA polymerase to initiate transcription from late gene promoters. The protein is mRNA-capping enzyme regulatory subunit OPG124 (OPG124) of Monkeypox virus.